A 307-amino-acid chain; its full sequence is Dihydroorotate dehydrogenase A (fumarate) (307 aa).

FMN-binding positions include S21 and 46–47 (KT). Residues K46, 70-74 (NSVGL), and N130 contribute to the substrate site. An FMN-binding site is contributed by N130. The active-site Nucleophile is the C133. 2 residues coordinate FMN: K168 and I194. 195–196 (NT) lines the substrate pocket. Residues G220, 246–247 (GG), and 268–269 (GS) each bind FMN.

Belongs to the dihydroorotate dehydrogenase family. Type 1 subfamily. As to quaternary structure, homodimer. FMN is required as a cofactor.

The protein localises to the cytoplasm. It carries out the reaction (S)-dihydroorotate + fumarate = orotate + succinate. It participates in pyrimidine metabolism; UMP biosynthesis via de novo pathway. In terms of biological role, catalyzes the conversion of dihydroorotate to orotate with fumarate as the electron acceptor. The protein is Dihydroorotate dehydrogenase A (fumarate) (pyrD) of Lactobacillus helveticus (strain DPC 4571).